The primary structure comprises 115 residues: NADH-ubiquinone oxidoreductase chain 3 (115 aa).

3 consecutive transmembrane segments (helical) span residues 3 to 23 (LMIT…IAFW), 55 to 75 (FFLV…LLPL), and 86 to 106 (LTLL…AYEW).

The protein belongs to the complex I subunit 3 family. In terms of assembly, core subunit of respiratory chain NADH dehydrogenase (Complex I) which is composed of 45 different subunits. Interacts with TMEM186. Interacts with TMEM242.

The protein resides in the mitochondrion inner membrane. The catalysed reaction is a ubiquinone + NADH + 5 H(+)(in) = a ubiquinol + NAD(+) + 4 H(+)(out). Functionally, core subunit of the mitochondrial membrane respiratory chain NADH dehydrogenase (Complex I) which catalyzes electron transfer from NADH through the respiratory chain, using ubiquinone as an electron acceptor. Essential for the catalytic activity of complex I. This chain is NADH-ubiquinone oxidoreductase chain 3, found in Loxodonta africana (African elephant).